A 487-amino-acid polypeptide reads, in one-letter code: uncharacterized protein (487 aa).

The helical transmembrane segment at 7 to 28 (HVISIFETLGAYFINIFYNFLY) threads the bilayer. 3 N-linked (GlcNAc...) asparagine; by host glycosylation sites follow: Asn73, Asn83, and Asn195. Residues 196 to 235 (RSLLHQIEELTSEKKSLLADLSTLRKKYEKRQSEYRRLVQ) are a coiled coil. Positions 294 to 305 (TSQELTSKSPNN) are enriched in polar residues. Residues 294-324 (TSQELTSKSPNNYPVPHSRTIVSKPSDNYPV) are disordered. N-linked (GlcNAc...) asparagine; by host glycosylation is present at Asn462.

Belongs to the asfivirus B475L family.

Its subcellular location is the host membrane. This is an uncharacterized protein from African swine fever virus (isolate Tick/South Africa/Pretoriuskop Pr4/1996) (ASFV).